The following is an 855-amino-acid chain: DNA mismatch repair protein MutS (855 aa).

616 to 623 is a binding site for ATP; it reads GPNMGGKS.

It belongs to the DNA mismatch repair MutS family.

This protein is involved in the repair of mismatches in DNA. It is possible that it carries out the mismatch recognition step. This protein has a weak ATPase activity. The polypeptide is DNA mismatch repair protein MutS (Salmonella newport (strain SL254)).